The following is an 895-amino-acid chain: Dystroglycan 1 (895 aa).

A signal peptide spans 1 to 29; that stretch reads MRMSVGSAVPLPLWGRTFLLLLSVAVTQS. Residues 30-408 are required for laminin recognition; it reads HWPSEPSEAV…SQIRPTMTIP (379 aa). Residues 49–71 form an O-glycosylated at one site region; that stretch reads SMHSALSDLHETVPTVVGIPDGT. The N-linked (GlcNAc...) asparagine glycan is linked to Asn-141. A disulfide bond links Cys-182 and Cys-264. Residues 316–485 are mucin-like domain; the sequence is ATPTPVTAIG…PATRMRTTTS (170 aa). Thr-317, Thr-319, and Thr-379 each carry an O-linked (Man6P...) threonine glycan. A disordered region spans residues 381-500; sequence TLGPIQPTRV…GEPNQRPELK (120 aa). Residues 393–403 show a composition bias toward polar residues; the sequence is AGTTVPSQIRP. Residues 413–447 are compositionally biased toward low complexity; sequence PSTVTTPPTTTTKKPRVSTPRPATPSTDSSTTTTR. The tract at residues 463 to 485 is O-glycosylated at seven sites with GalNAc; it reads TTKAPITRLETASPATRMRTTTS. A Peptidase S72 domain is found at 603–712; it reads KAPARFKAKL…MSITVTGSGS (110 aa). 3 N-linked (GlcNAc...) asparagine glycosylation sites follow: Asn-641, Asn-649, and Asn-661. Over 654–749 the chain is Extracellular; that stretch reads SIVVEWTNNT…DPEKSSEDDV (96 aa). The cysteines at positions 669 and 713 are disulfide-linked. Residues 724–747 are disordered; the sequence is PMRVPSEAPATEVPDRDPEKSSED. A compositionally biased stretch (basic and acidic residues) spans 736–747; sequence VPDRDPEKSSED. Residues 750–775 traverse the membrane as a helical segment; it reads YLHTVIPAVVVAAILLIAGIIAMICY. Positions 776–782 match the Nuclear localization signal motif; that stretch reads RKKRKGK. Over 776-895 the chain is Cytoplasmic; sequence RKKRKGKLTL…YRSPPPYVPP (120 aa). Thr-790 bears the Phosphothreonine mark. Residues 819–895 are required for interaction with CAV3; it reads LQEEKAPLPP…YRSPPPYVPP (77 aa). The interval 823–895 is disordered; that stretch reads KAPLPPPEYP…YRSPPPYVPP (73 aa). Positions 832–846 are enriched in polar residues; it reads PNQSMPETTPLNQDT. Pro residues predominate over residues 859 to 870; it reads SAPPYQPPPPFT. The segment at 880 to 895 is required for binding DMD and UTRN; that stretch reads PKNMTPYRSPPPYVPP. The short motif at 889 to 892 is the PPXY motif element; the sequence is PPPY. Tyr-892 is modified (phosphotyrosine; by SRC).

Monomer. Heterodimer of alpha- and beta-dystroglycan subunits which are the central components of the dystrophin-glycoprotein complex. This complex then can form a dystrophin-associated glycoprotein complex (DGC) which is composed of three subcomplexes: a cytoplasmic complex comprised of DMD (or UTRN), DTNA and a number of syntrophins, such as SNTB1, SNTB2, SNTG1 and SNTG2, the transmembrane dystroglycan complex, and the sarcoglycan-sarcospan complex. Interacts (via the N-terminal of alphaDAG1) with LARGE1; the interaction enhances laminin binding. Interacts with SGCD. Interacts with AGR2 and AGR3. Interacts (betaDAG1) with DMD; the interaction is inhibited by phosphorylation on the PPXY motif. Interacts (betaDAG1, via its PPXY motif) with UTRN (via its WWW and ZZ domains); the interaction is inhibited by phosphorylation on the PPXY motif. Interacts (betaDAG1, via its phosphorylated PPXY motif) with the SH2 domain-containing proteins, FYN, CSK, NCK and SHC. Interacts (betaDAG1) with CAV3 (via a central WW-like domain); the interaction disrupts the binding of DMD. BetaDAG1 directly interacts with ANK3, but not with ANK2; this interaction does not interfere with DMD-binding and is required for retention at costameres. Identified in a dystroglycan complex that contains at least PRX, DRP2, UTRN, DMD and DAG1. Interacts with POMGNT1. BetaDAG1 interacts with CD93. Post-translationally, O-glycosylated. POMGNT1 catalyzes the initial addition of N-acetylglucosamine, giving rise to the GlcNAc(beta1-2)Man(alpha1-)O-Ser/Thr moiety and thus providing the necessary basis for the addition of further carbohydrate moieties. Heavily O-glycosylated comprising of up to two thirds of its mass and the carbohydrate composition differs depending on tissue type. Mucin-type O-glycosylation is important for ligand binding activity. O-mannosylation is found in high abundance in both brain and muscle where the most abundant glycan is Sia-alpha-2-3-Gal-beta-1-4-Glc-NAc-beta-1-2-Man. In muscle, glycosylation on Thr-317, Thr-319 and Thr-379 by a phosphorylated O-mannosyl glycan with the structure 2-(N-acetylamido)-2-deoxygalactosyl-beta-1,3-2-(N-acetylamido)-2-deoxyglucosyl-beta-1,4-6-phosphomannose is mediated by like-acetylglucosaminyltransferase (LARGE1) protein amd is required for laminin binding. O-glycosylated in the N-terminal region with a core 1 or possibly core 8 glycan. The brain form displays a unique glycosylation pattern which is absent in other tissues; this form shows enhanced binding to laminin LAMA5 compared to the skeletal muscle form. In terms of processing, N-glycosylated. Autolytic cleavage produces the alpha and beta subunits. In cutaneous cells, as well as in certain pathological conditions, shedding of beta-dystroglycan can occur releasing a peptide of about 30 kDa. Post-translationally, SRC-mediated phosphorylation of the PPXY motif of the beta subunit recruits SH2 domain-containing proteins, but inhibits binding to WWW domain-containing proteins, DMD and UTRN. This phosphorylation also inhibits nuclear entry. Expressed in brain (at protein level). Expressed in the myelin sheath of peripheral nerves.

It localises to the secreted. Its subcellular location is the extracellular space. It is found in the cell membrane. The protein resides in the cytoplasm. The protein localises to the cytoskeleton. It localises to the nucleus. Its subcellular location is the nucleoplasm. It is found in the sarcolemma. The protein resides in the postsynaptic cell membrane. Its function is as follows. The dystroglycan complex is involved in a number of processes including laminin and basement membrane assembly, sarcolemmal stability, cell survival, peripheral nerve myelination, nodal structure, cell migration, and epithelial polarization. In terms of biological role, extracellular peripheral glycoprotein that acts as a receptor for extracellular matrix proteins containing laminin-G domains. Receptor for laminin-2 (LAMA2) and agrin in peripheral nerve Schwann cells. Also acts as a receptor for laminin LAMA5. Functionally, transmembrane protein that plays important roles in connecting the extracellular matrix to the cytoskeleton. Acts as a cell adhesion receptor in both muscle and non-muscle tissues. Receptor for both DMD and UTRN and, through these interactions, scaffolds axin to the cytoskeleton. Also functions in cell adhesion-mediated signaling and implicated in cell polarity. The chain is Dystroglycan 1 from Bos taurus (Bovine).